We begin with the raw amino-acid sequence, 466 residues long: Uronate isomerase (466 aa).

This sequence belongs to the metallo-dependent hydrolases superfamily. Uronate isomerase family.

The catalysed reaction is D-glucuronate = D-fructuronate. It catalyses the reaction aldehydo-D-galacturonate = keto-D-tagaturonate. It functions in the pathway carbohydrate metabolism; pentose and glucuronate interconversion. This chain is Uronate isomerase, found in Lachnoclostridium phytofermentans (strain ATCC 700394 / DSM 18823 / ISDg) (Clostridium phytofermentans).